We begin with the raw amino-acid sequence, 505 residues long: Formate--tetrahydrofolate ligase (505 aa).

Belongs to the formate--tetrahydrofolate ligase family.

It carries out the reaction (6S)-5,6,7,8-tetrahydrofolate + formate + ATP = (6R)-10-formyltetrahydrofolate + ADP + phosphate. The protein operates within one-carbon metabolism; tetrahydrofolate interconversion. In Bifidobacterium longum (strain NCC 2705), this protein is Formate--tetrahydrofolate ligase (fhs).